The chain runs to 66 residues: Protein translocase subunit SecE (66 aa).

Residues 29 to 49 form a helical membrane-spanning segment; it reads LIASTLVVVAAVFIFSLICLV.

This sequence belongs to the SecE/SEC61-gamma family. Component of the Sec protein translocase complex. Heterotrimer consisting of SecY, SecE and SecG subunits. The heterotrimers can form oligomers, although 1 heterotrimer is thought to be able to translocate proteins. Interacts with the ribosome. Interacts with SecDF, and other proteins may be involved. Interacts with SecA.

The protein localises to the cell inner membrane. In terms of biological role, essential subunit of the Sec protein translocation channel SecYEG. Clamps together the 2 halves of SecY. May contact the channel plug during translocation. This is Protein translocase subunit SecE from Rickettsia typhi (strain ATCC VR-144 / Wilmington).